A 166-amino-acid polypeptide reads, in one-letter code: Protein-export protein SecB (166 aa).

The protein belongs to the SecB family. Homotetramer, a dimer of dimers. One homotetramer interacts with 1 SecA dimer.

Its subcellular location is the cytoplasm. Its function is as follows. One of the proteins required for the normal export of preproteins out of the cell cytoplasm. It is a molecular chaperone that binds to a subset of precursor proteins, maintaining them in a translocation-competent state. It also specifically binds to its receptor SecA. This Actinobacillus succinogenes (strain ATCC 55618 / DSM 22257 / CCUG 43843 / 130Z) protein is Protein-export protein SecB.